An 805-amino-acid chain; its full sequence is Polycystin-2-like protein 1 (805 aa).

The disordered stretch occupies residues 1–59 (MNAVGSPEGQELQKLGSGAWDNPAYSGPPSPHGTLRVCTISSTGPLQPQPKKPEDEPQE). Over 1 to 103 (MNAVGSPEGQ…ELYIKTTLRE (103 aa)) the chain is Cytoplasmic. A lipid anchor (S-palmitoyl cysteine) is attached at C38. A helical membrane pass occupies residues 104–124 (LLVYIVFLVDICLLTYGMTSS). Over 125–356 (SAYYYTKVMS…NWDFFIVGCE (232 aa)) the chain is Extracellular. N-linked (GlcNAc...) asparagine glycans are attached at residues N177 and N207. C210 and C223 form a disulfide bridge. N-linked (GlcNAc...) asparagine glycosylation occurs at N241. Residues 357–376 (VIFCVFIFYYVVEEILELHI) traverse the membrane as a helical segment. Positions 370 and 373 each coordinate Ca(2+). At 377–384 (HRLRYLSS) the chain is on the cytoplasmic side. A helical membrane pass occupies residues 385–405 (IWNILDLVVILLSIVAVGFHI). Ca(2+) is bound by residues N387 and D390. At 406–433 (FRTLEVNRLMGKLLQQPNTYADFEFLAF) the chain is on the extracellular side. Residues 434–454 (WQTQYNNMNAVNLFFAWIKIF) form a helical membrane-spanning segment. Residues 455–479 (KYISFNKTMTQLSSTLARCAKDILG) lie on the Cytoplasmic side of the membrane. A helical membrane pass occupies residues 480 to 499 (FAVMFFIVFFAYAQLGYLLF). Residues 500–511 (GTQVENFSTFIK) are Extracellular-facing. A glycan (N-linked (GlcNAc...) asparagine) is linked at N505. The segment at residues 512–526 (CIFTQFRIILGDFDY) is an intramembrane region (pore-forming). Over 527 to 536 (NAIDNANRIL) the chain is Extracellular. The chain crosses the membrane as a helical span at residues 537–557 (GPAYFVTYVFFVFFVLLNMFL). The Cytoplasmic portion of the chain corresponds to 558–805 (AIINDTYSEV…RGEIPTLQRS (248 aa)). An EF-hand domain is found at 633 to 668 (HEITELTATFTKFDRDGNRILDEKEQEKMRQDLEEE). Coiled coils occupy residues 650–686 (NRIL…IVSS) and 700–740 (GWVS…MLER). A required for homooligomerization region spans residues 704–763 (GEEFYMLTRRVLQLETVLEGVVSQIDAVGSKLKMLERKGWLAPSPGVKEQAIWKHPQPAP). Residues 759–805 (PQPAPAVTPDPWGVQGGQESEVPYKREEEALEERRLSRGEIPTLQRS) form a disordered region. Residues 780 to 796 (VPYKREEEALEERRLSR) are compositionally biased toward basic and acidic residues.

The protein belongs to the polycystin family. Oligomer. Functional PKD2L1 homotetramer can be formed either through C-terminal trimerization followed by N-terminal dimerization of a fourth subunit with a subunit in the trimer or through dimerization followed by trimerization. Heterotetramer with either PKD1L1, PKD1L3 or PKD1; the heterotetrameric complex contains three PKD1L2 chains plus one chain from another family member. Interacts with PKD1L1, forming a ciliary calcium channel. Interacts with PKD1L3, forming a cation channel that is activated by low extracellular pH. Interacts with PKD1; this heteromeric functional cation channels is opened by hypo-osmotic stimulation. Interacts with RACK1; inhibits the channel activity possibly by impairing localization to the cell membrane. Post-translationally, palmitoylation is important for expression at the cell membrane and for channel activity. As to expression, detected in taste bud cells in fungiform papillae (at protein level). Ubiquitous. Expressed in adult heart, skeletal muscle, brain, spleen, testis, retina and liver. Isoform 4 appears to be expressed only in transformed lymphoblasts.

The protein resides in the cell projection. Its subcellular location is the cilium membrane. It is found in the cell membrane. The protein localises to the cytoplasmic vesicle. It carries out the reaction Ca(2+)(in) = Ca(2+)(out). The enzyme catalyses Na(+)(in) = Na(+)(out). It catalyses the reaction K(+)(in) = K(+)(out). The catalysed reaction is Mg(2+)(in) = Mg(2+)(out). With respect to regulation, the non-selective cation channel is gated following an off-response property by acid: gated open after the removal of acid stimulus, but not during acid application. Channel activity is inhibited by phosphatidylinositol-4,5-bisphosphate (PIP2). Non-selective cation channel activity is substantially increased when either the extracellular or intracellular calcium-ion concentration is raised. Regulation of non-selective cation channel activity by external calcium is bimodal, first sensitizing and subsequently inactivating the current. Homotetrameric, non-selective cation channel that is permeable to sodium, potassium, magnesium and calcium. Also forms functionnal heteromeric channels with PKD1, PKD1L1 and PKD1L3. Pore-forming subunit of a heterotetrameric, non-selective cation channel, formed by PKD1L2 and PKD1L3, that is permeable to sodium, potassium, magnesium and calcium and which may act as a sour taste receptor in gustatory cells; however, its contribution to sour taste perception is unclear in vivo and may be indirect. The homomeric and heteromeric channels formed by PKD1L2 and PKD1L3 are activated by low pH and Ca(2+), but opens only when the extracellular pH rises again and after the removal of acid stimulus. Pore-forming subunit of a calcium-permeant ion channel formed by PKD1L2 and PKD1L1 in primary cilia, where it controls cilium calcium concentration, without affecting cytoplasmic calcium concentration, and regulates sonic hedgehog/SHH signaling and GLI2 transcription. The PKD1L1:PKD2L1 complex channel is mechanosensitive only at high pressures and is highly temperature sensitive. Pore-forming subunit of a calcium-permeant ion channel formed by PKD1L2 and PKD1 that produces a transient increase in intracellular calcium concentration upon hypo-osmotic stimulation (200 mOsm). May play a role in the perception of carbonation taste. May play a role in the sensory perception of water, via a mechanism that activates the channel in response to dilution of salivary bicarbonate and changes in salivary pH. The chain is Polycystin-2-like protein 1 from Homo sapiens (Human).